The chain runs to 53 residues: Large ribosomal subunit protein bL32 (53 aa).

Residues 1-20 (MAVPKRRVSHTRAAKRRTHY) show a composition bias toward basic residues. Residues 1–53 (MAVPKRRVSHTRAAKRRTHYKLTLPMPVKDADGTWRMPHHMNMTTGEYKTTKA) form a disordered region. Over residues 42–53 (NMTTGEYKTTKA) the composition is skewed to polar residues.

Belongs to the bacterial ribosomal protein bL32 family.

The protein is Large ribosomal subunit protein bL32 of Sulfurovum sp. (strain NBC37-1).